A 103-amino-acid chain; its full sequence is uncharacterized protein (103 aa).

Over residues 38–51 the composition is skewed to low complexity; that stretch reads TTTTSSTTSASTTS. The segment at 38 to 70 is disordered; the sequence is TTTTSSTTSASTTSQPSFSLPTSCNSNSPQSNL. Positions 52–70 are enriched in polar residues; sequence QPSFSLPTSCNSNSPQSNL.

This is an uncharacterized protein from Dictyostelium discoideum (Social amoeba).